The sequence spans 87 residues: Scorpine-like peptide Tco 41.46-2 (87 aa).

An N-terminal signal peptide occupies residues 1 to 19 (MERKLALLLFLGMVTLASC). A BetaSPN-type CS-alpha/beta domain is found at 53–87 (QFGCPAYEGYCNNHCQDIERKDGECHGFKCKCAKD). 3 disulfides stabilise this stretch: cysteine 56/cysteine 77, cysteine 63/cysteine 82, and cysteine 67/cysteine 84.

Belongs to the long chain scorpion toxin family. Class 1 subfamily. Expressed by the venom gland.

It is found in the secreted. May have antibacterial activity. In terms of biological role, inhibits voltage-gated potassium channel. Functionally, does not induce hemolytic activity, lactate dehydrogenase (LDH) release from mast cells, mast cell degranulation, and antimicrobial effects. In vivo, injection into mice causes moderate edema formation, but induces very weak or no change in nociceptive sensibility. It also reduces mice locomotion, suggesting an increase in anxiety, but causes no alteration in rearing (standing on hind limbs). The chain is Scorpine-like peptide Tco 41.46-2 from Tityus costatus (Brazilian scorpion).